The primary structure comprises 254 residues: Mediator of RNA polymerase II transcription subunit 4 (254 aa).

A coiled-coil region spans residues 72–114 (RVHQEMQSLEKEVEKRDSDIQQLQKQLKEAEHILATAVYQAKE). The disordered stretch occupies residues 215 to 254 (ILPPHHGNDFGLEPPGHNKENEDDVEAMSTDSSSSSSDSD). Residues 243 to 254 (STDSSSSSSDSD) are compositionally biased toward low complexity.

It belongs to the Mediator complex subunit 4 family. Component of the Mediator complex.

The protein localises to the nucleus. Its function is as follows. Component of the Mediator complex, a coactivator involved in the regulated transcription of nearly all RNA polymerase II-dependent genes. Mediator functions as a bridge to convey information from gene-specific regulatory proteins to the basal RNA polymerase II transcription machinery. Mediator is recruited to promoters by direct interactions with regulatory proteins and serves as a scaffold for the assembly of a functional preinitiation complex with RNA polymerase II and the general transcription factors. The sequence is that of Mediator of RNA polymerase II transcription subunit 4 (med4) from Danio rerio (Zebrafish).